The sequence spans 311 residues: Malate dehydrogenase (311 aa).

NAD(+) contacts are provided by residues 7 to 13 and D34; that span reads GAAGGIG. Substrate-binding residues include R81 and R87. NAD(+) contacts are provided by residues N94 and 117-119; that span reads ITN. Residues N119 and R153 each coordinate substrate. H177 (proton acceptor) is an active-site residue. Position 227 (M227) interacts with NAD(+).

Belongs to the LDH/MDH superfamily. MDH type 1 family. Homodimer.

The enzyme catalyses (S)-malate + NAD(+) = oxaloacetate + NADH + H(+). Catalyzes the reversible oxidation of malate to oxaloacetate. This chain is Malate dehydrogenase, found in Shewanella loihica (strain ATCC BAA-1088 / PV-4).